Reading from the N-terminus, the 379-residue chain is Gonadotropin-releasing hormone II receptor (379 aa).

Residues 1–45 lie on the Extracellular side of the membrane; it reads MSGNTTLLLSNPTNVLDNSSVLNVSVSPPVLKWETPTFTTAARFR. Residues N4, N18, and N23 are each glycosylated (N-linked (GlcNAc...) asparagine). Residues 46 to 65 form a helical membrane-spanning segment; it reads VAATLVLFVFAAASNLSVLL. Topologically, residues 66–80 are cytoplasmic; sequence SVTRGRGRRLASHLR. The chain crosses the membrane as a helical span at residues 81-100; the sequence is PLIASLASADLVMTFVVMPL. At 101-118 the chain is on the extracellular side; the sequence is DAVWNVTVQWYAGDAMCK. N-linked (GlcNAc...) asparagine glycosylation is present at N105. An intrachain disulfide couples C117 to C194. A helical membrane pass occupies residues 119-140; sequence LMCFLKLFAMHSAAFILVVVSL. Topologically, residues 141-167 are cytoplasmic; sequence DRHHAILHPLDTLDAGRRNRRMLLTAW. Residues 168–184 form a helical membrane-spanning segment; the sequence is ILSLLLASPQLFIFRAI. Residues 185–210 are Extracellular-facing; that stretch reads KAKGVDFVQCATHGSFQQHWQETAYN. The chain crosses the membrane as a helical span at residues 211-230; sequence MFHFVTLYVFPLLVMSLCYT. Over 231–283 the chain is Cytoplasmic; the sequence is RILVEINRQMHRSKDKAGEPCLRRSGTDMIPKARMKTLKMTIIIVASFVICWT. The chain crosses the membrane as a helical span at residues 284–302; that stretch reads PYYLLGIWYWFQPQMLHVI. The Extracellular segment spans residues 303 to 308; that stretch reads PDYVHH. The helical transmembrane segment at 309–328 threads the bilayer; that stretch reads VFFVFGNLNTCCDPVIYGFF. Topologically, residues 329-379 are cytoplasmic; the sequence is TPSFRADLSRCFCWRNQNASAKSLPHFSGHRREVSGEAESDLGSGDQPSGQ. Positions 355 to 379 are disordered; that stretch reads FSGHRREVSGEAESDLGSGDQPSGQ.

Belongs to the G-protein coupled receptor 1 family. In terms of processing, phosphorylated on the C-terminal cytoplasmic tail.

It is found in the cell membrane. Its function is as follows. Receptor for gonadotropin releasing hormone II (GnRH II). This receptor mediates its action by association with G proteins that activate a phosphatidylinositol-calcium second messenger system. The polypeptide is Gonadotropin-releasing hormone II receptor (Clarias gariepinus (North African catfish)).